Reading from the N-terminus, the 239-residue chain is O-antigen export system ATP-binding protein RfbE (239 aa).

The 212-residue stretch at 28-239 (VRVSTGGRIG…LIYEESMDIL (212 aa)) folds into the ABC transporter domain. 66–73 (GHNGAGKS) provides a ligand contact to ATP.

Belongs to the ABC transporter superfamily.

It is found in the cell inner membrane. Functionally, may form an ATP-driven O-antigen export apparatus, in association with RfbD. This Yersinia enterocolitica protein is O-antigen export system ATP-binding protein RfbE (rfbE).